A 633-amino-acid polypeptide reads, in one-letter code: Chaperone protein HtpG (633 aa).

Residues 1–341 (MTAPHETMSF…SADLPLNVSR (341 aa)) form an a; substrate-binding region. Residues 342–562 (ELLQESRDVK…EGDMSGYLQR (221 aa)) are b. Positions 563–633 (LLKQAGQKAP…YVQRVNKLLA (71 aa)) are c.

This sequence belongs to the heat shock protein 90 family. In terms of assembly, homodimer.

It is found in the cytoplasm. In terms of biological role, molecular chaperone. Has ATPase activity. The polypeptide is Chaperone protein HtpG (Cupriavidus necator (strain ATCC 17699 / DSM 428 / KCTC 22496 / NCIMB 10442 / H16 / Stanier 337) (Ralstonia eutropha)).